Reading from the N-terminus, the 434-residue chain is Protein HEAT INTOLERANT 4 (434 aa).

The Nuclear localization signal 1 signature appears at 1-8 (MKKGAKRK). The segment covering 1–15 (MKKGAKRKGVSKAGR) has biased composition (basic residues). The tract at residues 1-131 (MKKGAKRKGV…PVPKAKKPRA (131 aa)) is disordered. Over residues 30-53 (ETTKTTQEESQQHEEEVVDEVKEN) the composition is skewed to basic and acidic residues. Positions 54–82 (GEEEEAKGDQEEEEDAKPDSLEEDEENQE) are enriched in acidic residues. Residues 83–98 (DEVKAEEVKEEVEKKP) show a composition bias toward basic and acidic residues. The Nuclear localization signal 2 signature appears at 95-102 (EKKPVARR). A compositionally biased stretch (basic residues) spans 99-110 (VARRGGKRKRAT). The span at 111–122 (KKDTEIKDEKKP) shows a compositional bias: basic and acidic residues. Residues 363 to 394 (VKEQVRAAKKANREAKDARKKAIEEMSEDTKQ) adopt a coiled-coil conformation. A Nuclear localization signal 3 motif is present at residues 370-377 (AKKANREA).

Its subcellular location is the nucleus. The protein resides in the nucleolus. In terms of biological role, essential protein required for basal thermotolerance, especially during heat-induced chromocentre decondensation, thus regulating transcriptional gene silencing (TGS). The chain is Protein HEAT INTOLERANT 4 from Arabidopsis thaliana (Mouse-ear cress).